A 298-amino-acid polypeptide reads, in one-letter code: Enoyl-CoA hydratase ACTT6 (298 aa).

Belongs to the enoyl-CoA hydratase/isomerase family.

The protein operates within mycotoxin biosynthesis. In terms of biological role, enoyl-CoA hydratase; part of the gene clusters that mediate the biosynthesis of the host-selective toxins (HSTs) ACT-toxins responsible for brown spot of tangerine disease by the tangerine pathotype which affects tangerines and mandarins. ACT-toxins consist of three moieties, 9,10-epoxy-8-hydroxy-9-methyl-decatrienoic acid (EDA), valine and a polyketide. ACT-toxin I is toxic to both citrus and pear; toxin II the 5''-deoxy derivative of ACT-toxin I, is highly toxic to pear and slightly toxic to citrus. On cellular level, ACT-toxins affect plasma membrane of susceptible cells and cause a sudden increase in loss of K(+) after a few minutes of toxin treatment. The acyl-CoA ligase ACTT1, the hydrolase ACTT2, the enoyl-CoA hydratases ACTT3 and ACTT6, and the acyl-CoA synthetase ACTT5 are all involved in the biosynthesis of the AK-, AF- and ACT-toxin common 9,10-epoxy-8-hydroxy-9-methyl-decatrienoic acid (EDA) structural moiety. The exact role of each enzyme, and of additional enzymes identified within the AF-toxin clusters have still to be determined. On the other hand, ACTTS1 to ACTTS4 are specific to the tangerine pathotype. The function of ACTTS3 is to elongate the polyketide chain portion of ACT-toxin that is unique to this toxin. The enoyl-reductase ACTTS2 might complement the missing enoyl-reductase (ER) domain in ACTTS3 in the synthesis of the polyketide portion of ACT-toxin. The roles of the nonribosomal peptide synthetases-related proteins ACTTS1 and ACTTS4 have also still not been elucidated. In Alternaria alternata (Alternaria rot fungus), this protein is Enoyl-CoA hydratase ACTT6.